We begin with the raw amino-acid sequence, 190 residues long: Ribosome maturation factor RimM (190 aa).

The 89-residue stretch at 102–190 folds into the PRC barrel domain; the sequence is EDEYYWIDLV…RIDSDWPLED (89 aa).

It belongs to the RimM family. As to quaternary structure, binds ribosomal protein uS19.

It localises to the cytoplasm. An accessory protein needed during the final step in the assembly of 30S ribosomal subunit, possibly for assembly of the head region. Essential for efficient processing of 16S rRNA. May be needed both before and after RbfA during the maturation of 16S rRNA. It has affinity for free ribosomal 30S subunits but not for 70S ribosomes. This is Ribosome maturation factor RimM from Bordetella avium (strain 197N).